An 81-amino-acid polypeptide reads, in one-letter code: Cell division protein ZapB (81 aa).

Positions 6 to 80 form a coiled coil; it reads EVFEKLEAKV…LQALLGRMEE (75 aa). A compositionally biased stretch (polar residues) spans 38–47; sequence SLAQDVQSAQ. The tract at residues 38–67 is disordered; that stretch reads SLAQDVQSAQHQREELERENNHLKEQQSGW. A compositionally biased stretch (basic and acidic residues) spans 48-62; it reads HQREELERENNHLKE.

Belongs to the ZapB family. As to quaternary structure, homodimer. The ends of the coiled-coil dimer bind to each other, forming polymers. Interacts with FtsZ.

It localises to the cytoplasm. Non-essential, abundant cell division factor that is required for proper Z-ring formation. It is recruited early to the divisome by direct interaction with FtsZ, stimulating Z-ring assembly and thereby promoting cell division earlier in the cell cycle. Its recruitment to the Z-ring requires functional FtsA or ZipA. This chain is Cell division protein ZapB, found in Citrobacter koseri (strain ATCC BAA-895 / CDC 4225-83 / SGSC4696).